Reading from the N-terminus, the 430-residue chain is Pre-mRNA-processing protein 45 (430 aa).

Over residues 1-26 (MSFRTLSSLLPSPQNSEVSESSAFSR) the composition is skewed to polar residues. 3 disordered regions span residues 1–28 (MSFRTLSSLLPSPQNSEVSESSAFSRQS), 280–299 (MERNQRRRAERELERSNKMS), and 370–430 (PTTG…PHTS).

The protein belongs to the SNW family. Associated with the spliceosome.

It localises to the nucleus. In terms of biological role, involved in pre-mRNA splicing. The sequence is that of Pre-mRNA-processing protein 45 (PRP45) from Kluyveromyces lactis (strain ATCC 8585 / CBS 2359 / DSM 70799 / NBRC 1267 / NRRL Y-1140 / WM37) (Yeast).